The chain runs to 132 residues: DNA-directed RNA polymerase subunit omega (132 aa).

The disordered stretch occupies residues 89 to 109 (HSSESESIFNTSSQEEGTSFD). Over residues 96–105 (IFNTSSQEEG) the composition is skewed to polar residues.

Belongs to the RNA polymerase subunit omega family. The RNAP catalytic core consists of 2 alpha, 1 beta, 1 beta' and 1 omega subunit. When a sigma factor is associated with the core the holoenzyme is formed, which can initiate transcription.

The enzyme catalyses RNA(n) + a ribonucleoside 5'-triphosphate = RNA(n+1) + diphosphate. Promotes RNA polymerase assembly. Latches the N- and C-terminal regions of the beta' subunit thereby facilitating its interaction with the beta and alpha subunits. In Bartonella tribocorum (strain CIP 105476 / IBS 506), this protein is DNA-directed RNA polymerase subunit omega.